The chain runs to 182 residues: Peptidyl-prolyl cis-trans isomerase ssp-1 (182 aa).

The 35-residue stretch at 7–41 (TGLPEDWEVRHSQSKNLPYYFNSATKTSRWEPPSG) folds into the WW domain. Positions 71 to 182 (QGKIRCAHLL…SGLHLIERLE (112 aa)) constitute a PpiC domain.

The enzyme catalyses [protein]-peptidylproline (omega=180) = [protein]-peptidylproline (omega=0). Its function is as follows. Site-specific PPIase with respect to the amino acid N-terminal to the proline residue. Peptides with glutamate, phosphoserine, or phosphothreonine in the -1 position are the best substrates. It is not only able to isomerize small peptides but is also active in protein folding. This is Peptidyl-prolyl cis-trans isomerase ssp-1 (ssp-1) from Neurospora crassa (strain ATCC 24698 / 74-OR23-1A / CBS 708.71 / DSM 1257 / FGSC 987).